We begin with the raw amino-acid sequence, 324 residues long: Methyltransferase pytC (324 aa).

A disordered region spans residues 1 to 28 (MTVRTAAEPPNRIEVDMDAPSLDTDSSC).

The protein belongs to the methyltransferase superfamily. LaeA methyltransferase family.

Its pathway is secondary metabolite biosynthesis. Methyltransferase; part of the gene cluster that mediates the biosynthesis of pyranterreones, a family of antioxidative compounds. The first step of pyranonigrins biosynthesis is performed by the hybrid PKS-NRPS synthetase pytA that condenses 4 malonyl-CoA units ato the acetyl starter unit by the modular PKS of pytA. The acyl chain is then connected to an L-serine through the amide bond by the modular NRPS of pytA. A tetramic acid is formed and released from the PKS-NRPS pytA to give pyranterreone 5 with the help of the thioesterase pytI. Pyranterreone 5 could be methylated by pytC to afford pyranterreone 6. Both pyranterreones 5 and 6 are subsequently oxidized by the FAD-linked oxidoreductase pytB and the cytochrome P450 monooxygenase pytD to form the fused gamma-pyrone core, resulting in pyranterreones 7 and 11, respectively. The hydroxy group at C-8 of pyranterreones 7 and 11 are dehydrated by the aspartyl protease pytH to form a delta-7 double bond to give pyranterreones 3 and 1, 2 accordingly. The exo-methylene of pyranterreone 3 could be reduced into a pendant methyl by reductase pytE to provide pyranterreone 4, also known as cordylactam. Pyranterreone 4 can be reconverted to pyranterreone 3 through pytB-catalyzed dehydrogenation or further oxidized to pyranterreones 9 and 10. This Aspergillus terreus protein is Methyltransferase pytC.